The chain runs to 459 residues: UDP-N-acetylmuramoylalanine--D-glutamate ligase (459 aa).

Residue 120–126 (GSNGKTT) participates in ATP binding.

The protein belongs to the MurCDEF family.

It is found in the cytoplasm. It carries out the reaction UDP-N-acetyl-alpha-D-muramoyl-L-alanine + D-glutamate + ATP = UDP-N-acetyl-alpha-D-muramoyl-L-alanyl-D-glutamate + ADP + phosphate + H(+). The protein operates within cell wall biogenesis; peptidoglycan biosynthesis. Cell wall formation. Catalyzes the addition of glutamate to the nucleotide precursor UDP-N-acetylmuramoyl-L-alanine (UMA). The sequence is that of UDP-N-acetylmuramoylalanine--D-glutamate ligase from Lactobacillus acidophilus (strain ATCC 700396 / NCK56 / N2 / NCFM).